A 347-amino-acid polypeptide reads, in one-letter code: D-alanine--D-alanine ligase (347 aa).

The region spanning 131–333 (KRVLESAGIA…YPELIERLVD (203 aa)) is the ATP-grasp domain. 161–216 (EEKLAYPVFTKPSNMGSSVGISKSENQEELRQALKLAFRYDSRVLVEQGVNAREIE) contributes to the ATP binding site. Residues Asp287, Glu300, and Asn302 each coordinate Mg(2+).

Belongs to the D-alanine--D-alanine ligase family. It depends on Mg(2+) as a cofactor. The cofactor is Mn(2+).

It is found in the cytoplasm. It catalyses the reaction 2 D-alanine + ATP = D-alanyl-D-alanine + ADP + phosphate + H(+). It functions in the pathway cell wall biogenesis; peptidoglycan biosynthesis. Functionally, cell wall formation. This is D-alanine--D-alanine ligase from Streptococcus pneumoniae (strain ATCC BAA-255 / R6).